Reading from the N-terminus, the 80-residue chain is MLELLFVIGFFVMLMVTGVSLLGIIAALVVATAIMFLGGMLALMIKLLPWLLLAIAVVWVIKAIKAPKVPKYQRYDRWRY.

Helical transmembrane passes span 5–25 (LFVIGFFVMLMVTGVSLLGII) and 41–61 (LALMIKLLPWLLLAIAVVWVI).

It localises to the cell inner membrane. Effector of the phage shock response. This is Phage shock protein G (pspG) from Escherichia coli (strain K12).